The chain runs to 537 residues: ATP-dependent 6-phosphofructokinase 5, chloroplastic (537 aa).

The transit peptide at 1–52 (MDALSQAISSGISVPYKNNSSSLVPSHGLTSLILRKSRSPVNPSSRSRVSVR) directs the protein to the chloroplast. Positions 35–64 (RKSRSPVNPSSRSRVSVRASEIQHSKTSAS) are disordered. Over residues 39 to 54 (SPVNPSSRSRVSVRAS) the composition is skewed to low complexity. Position 147 is a phosphoserine (Ser147). Residues Gly189, 253–254 (RG), and 278–281 (GNGT) each bind ATP. A Mg(2+)-binding site is contributed by Asn279. Residues 307 to 309 (TID), 352 to 354 (MGR), Glu408, and 460 to 463 (YMIR) each bind substrate. Asp309 functions as the Proton acceptor in the catalytic mechanism.

It belongs to the phosphofructokinase type A (PFKA) family. PPi-dependent PFK group II subfamily. Atypical ATP-dependent clade 'X' sub-subfamily. As to quaternary structure, homotetramer. It depends on Mg(2+) as a cofactor. In terms of tissue distribution, expressed in roots, leaves, stems and flowers.

The protein localises to the plastid. Its subcellular location is the chloroplast. It carries out the reaction beta-D-fructose 6-phosphate + ATP = beta-D-fructose 1,6-bisphosphate + ADP + H(+). Its pathway is carbohydrate degradation; glycolysis; D-glyceraldehyde 3-phosphate and glycerone phosphate from D-glucose: step 3/4. Its activity is regulated as follows. Allosterically activated by AMP. Catalyzes the phosphorylation of D-fructose 6-phosphate to fructose 1,6-bisphosphate by ATP, the first committing step of glycolysis. In Arabidopsis thaliana (Mouse-ear cress), this protein is ATP-dependent 6-phosphofructokinase 5, chloroplastic.